Here is a 390-residue protein sequence, read N- to C-terminus: MNFEFEREIGFINSQPSLAECLTSFPAVLESFQTSSIKDSTAIPPPFEHTIPSLSPCTGNQARPRSQKRTASNGLQLRTQTAPPTQHQQGPAPLSGGAPLAHEFPWMKEKKSSKKCPKPGATAAAAAASPSQASSGYTTAGLESPTEIQGGLDNVSGSRRLRTAYTNTQLLELEKEFHFNKYLCRPRRVEIAALLDLTERQVKVWFQNRRMKHKRQTTHHRDGQEGEPSGFDLLEGTDASSPYSSQSLEVSGSGSAAPSESETCPTTAAYTNSSDKSQPTPEEGQASQPEPASVPDTAVHSPPYPTPTADNPTTMAEGRAAGPEHSFTEPQDATSLPDLNFFSTDSCLQISDALSPSLQSSLDSPVDFSEEDFDLFTSTLCTIDLQHLQF.

4 disordered regions span residues 40–73 (STAI…TASN), 81–100 (TAPP…GAPL), 108–155 (KEKK…LDNV), and 211–338 (MKHK…SLPD). Polar residues predominate over residues 52 to 73 (PSLSPCTGNQARPRSQKRTASN). The Antp-type hexapeptide signature appears at 103–108 (EFPWMK). Low complexity predominate over residues 118-135 (KPGATAAAAAASPSQASS). Residues 158-217 (SRRLRTAYTNTQLLELEKEFHFNKYLCRPRRVEIAALLDLTERQVKVWFQNRRMKHKRQT) constitute a DNA-binding region (homeobox). The span at 244 to 262 (SSQSLEVSGSGSAAPSESE) shows a compositional bias: low complexity. Over residues 263 to 290 (TCPTTAAYTNSSDKSQPTPEEGQASQPE) the composition is skewed to polar residues.

This sequence belongs to the Antp homeobox family. Proboscipedia subfamily.

It localises to the nucleus. Functionally, sequence-specific transcription factor which is part of a developmental regulatory system that provides cells with specific positional identities on the anterior-posterior axis. Plays an important role in the patterning of hindbrain and pharyngeal arches. This Danio rerio (Zebrafish) protein is Homeobox protein Hox-B2a (hoxb2a).